We begin with the raw amino-acid sequence, 180 residues long: ATP-dependent protease subunit HslV (180 aa).

The active site involves Thr-5. Na(+)-binding residues include Gly-165, Cys-168, and Thr-171.

It belongs to the peptidase T1B family. HslV subfamily. As to quaternary structure, a double ring-shaped homohexamer of HslV is capped on each side by a ring-shaped HslU homohexamer. The assembly of the HslU/HslV complex is dependent on binding of ATP.

The protein resides in the cytoplasm. The enzyme catalyses ATP-dependent cleavage of peptide bonds with broad specificity.. Allosterically activated by HslU binding. Its function is as follows. Protease subunit of a proteasome-like degradation complex believed to be a general protein degrading machinery. The polypeptide is ATP-dependent protease subunit HslV (Helicobacter acinonychis (strain Sheeba)).